The chain runs to 82 residues: Small ribosomal subunit protein bS18 (82 aa).

Residues 1–25 (MKRNNMKRARMEQSRRPKKNPLKAE) are disordered.

This sequence belongs to the bacterial ribosomal protein bS18 family. As to quaternary structure, part of the 30S ribosomal subunit. Forms a tight heterodimer with protein bS6.

Binds as a heterodimer with protein bS6 to the central domain of the 16S rRNA, where it helps stabilize the platform of the 30S subunit. The polypeptide is Small ribosomal subunit protein bS18 (Corynebacterium urealyticum (strain ATCC 43042 / DSM 7109)).